Consider the following 1200-residue polypeptide: Zinc finger protein 804A (1200 aa).

The C2H2-type zinc-finger motif lies at F57–H81. 6 disordered regions span residues S252–M280, D343–A367, H582–G687, E727–S777, Q799–M828, and P874–E949. Over residues H585–K603 the composition is skewed to basic residues. A compositionally biased stretch (basic and acidic residues) spans S604–T666. Composition is skewed to polar residues over residues M667–G687 and L732–N756. Basic residues predominate over residues P800–L811. A compositionally biased stretch (polar residues) spans T891 to K944.

The protein is Zinc finger protein 804A (Znf804a) of Mus musculus (Mouse).